We begin with the raw amino-acid sequence, 163 residues long: Translation initiation factor IF-3-like (163 aa).

Belongs to the IF-3 family.

The protein is Translation initiation factor IF-3-like of Nostoc sp. (strain PCC 7120 / SAG 25.82 / UTEX 2576).